The sequence spans 183 residues: Large ribosomal subunit protein uL6 (183 aa).

Belongs to the universal ribosomal protein uL6 family. Part of the 50S ribosomal subunit.

Its function is as follows. This protein binds to the 23S rRNA, and is important in its secondary structure. It is located near the subunit interface in the base of the L7/L12 stalk, and near the tRNA binding site of the peptidyltransferase center. The sequence is that of Large ribosomal subunit protein uL6 from Moorella thermoacetica (strain ATCC 39073 / JCM 9320).